The sequence spans 1275 residues: Histone-lysine N-methyltransferase PRDM16 (1275 aa).

Residues 1 to 10 (MRSKARARKL) show a composition bias toward basic residues. The interval 1 to 66 (MRSKARARKL…SEDFTPKEGS (66 aa)) is disordered. Positions 82-211 (PDFELRESSI…PGEELLVHVK (130 aa)) constitute an SET domain. The segment at 230–255 (FRCDECDELFQCRLDLRRHKKYACSS) adopts a C2H2-type 1; degenerate zinc-finger fold. 5 consecutive C2H2-type zinc fingers follow at residues 282–304 (HECKDCERMFPNKYSLEQHMIVH), 310–332 (YKCDQCPKAFNWKSNLIRHQMSH), 338–361 (FECENCVKVFTDPSNLQRHIRSQH), 367–389 (HACPDCGKTFATSSGLKQHKHIH), and 395–417 (FICEVCHKSYTQFSNLCRHKRMH). The C2H2-type 7; atypical zinc-finger motif lies at 424-446 (IKCKDCGQMFSTTSSLNKHRRFC). 2 disordered regions span residues 592–658 (VKNR…VPPG) and 789–838 (APKV…GVSE). Residues 610 to 625 (TTTGTDLDTTTGTGSD) are compositionally biased toward low complexity. 2 stretches are compositionally biased toward basic and acidic residues: residues 631-648 (DSDRDKGKDKGKPVESKP) and 821-835 (REPRKNHVYGERKPG). The interaction with CTBP1, CTBP2 and ZNF516 stretch occupies residues 680-1038 (EEQLLTASGA…KHEHEGAPVS (359 aa)). The tract at residues 740–1275 (PFTDRALAHN…SGAFNPINHL (536 aa)) is mediates interaction with SKI and regulation of TGF-beta signaling. 3 C2H2-type zinc fingers span residues 951–973 (YTCRYCGKIFPRSANLTRHLRTH), 979–1002 (YRCKYCDRSFSISSNLQRHVRNIH), and 1008–1030 (FKCHLCNRCFGQQTNLDRHLKKH). 2 disordered regions span residues 1027–1065 (LKKHEHEGAPVSQHSGVLTNHLGTSASSPTSESDNHALL) and 1084–1169 (EMNQ…MGFD). Polar residues predominate over residues 1038–1058 (SQHSGVLTNHLGTSASSPTSE). The span at 1117–1133 (DVEEEEEEELEEEDDDS) shows a compositional bias: acidic residues.

The protein belongs to the PRDM16 family. In terms of assembly, interacts with CEBPA, CEBPB and CEBPD; the interaction is direct. Interacts with PPARG and PPARA; controls brown adipocytes. Interacts with CTBP1 and CTBP2; represses the expression of WAT-specific genes. Interacts with PPARGC1A and PPARGC1B; interaction with PPARGC1A or PPARGC1B activates the transcription of BAT-specific gene. Interacts with HDAC1, SKI and SMAD2; the interaction with SKI promotes the recruitment of SMAD3-HDAC1 complex on the promoter of TGF-beta target genes. Interacts with ZNF516; the interaction is direct and may play a role in the transcription of brown adipose tissue-specific gene. In terms of tissue distribution, enriched in BAT compared to WAT. Detected in heart, lung, kidney and brain. Expressed in nuclei of cardiomyocytes.

It localises to the nucleus. It is found in the cytoplasm. It catalyses the reaction L-lysyl(9)-[histone H3] + S-adenosyl-L-methionine = N(6)-methyl-L-lysyl(9)-[histone H3] + S-adenosyl-L-homocysteine + H(+). Binds DNA and functions as a transcriptional regulator. Displays histone methyltransferase activity and monomethylates 'Lys-9' of histone H3 (H3K9me1) in vitro. Probably catalyzes the monomethylation of free histone H3 in the cytoplasm which is then transported to the nucleus and incorporated into nucleosomes where SUV39H methyltransferases use it as a substrate to catalyze histone H3 'Lys-9' trimethylation. Likely to be one of the primary histone methyltransferases along with MECOM/PRDM3 that direct cytoplasmic H3K9me1 methylation. Functions in the differentiation of brown adipose tissue (BAT) which is specialized in dissipating chemical energy in the form of heat in response to cold or excess feeding while white adipose tissue (WAT) is specialized in the storage of excess energy and the control of systemic metabolism. Together with CEBPB, regulates the differentiation of myoblastic precursors into brown adipose cells. Functions as a repressor of TGF-beta signaling. This Mus musculus (Mouse) protein is Histone-lysine N-methyltransferase PRDM16.